A 509-amino-acid polypeptide reads, in one-letter code: Kelch repeat protein M-T9 (509 aa).

Residues 15–79 (SDVTVVAGDS…MYAGCDGLND (65 aa)) form the BTB domain. Kelch repeat units lie at residues 274–320 (VLYC…IVNG), 321–368 (YIYV…YRNE), 370–415 (WIVG…VYNN), 416–463 (RLYC…VYNK), and 465–509 (IYVL…NDEI).

The protein belongs to the poxviruses Kelch family.

This chain is Kelch repeat protein M-T9, found in Myxoma virus (strain Lausanne) (MYXV).